A 1210-amino-acid chain; its full sequence is MEFDFFSFVAPSRVQSLVLPFGRVRRKSFSSYLQLLRRVSHIQLSDVPVATATRKSSSFNPLAFPLGRLVYNFLTSLDDQQALLEEFEYFRRVFVLIGIVDGSEEQEVEQLCSTLDVWRRRIPHALVAKCIVFNCPEDKENIFNAPNIIIGPRSDFSINSVMRSILCDITAELLEGFSSLEFSIHARSVILSPITDMPHLAPLQRKNSNASIHSLGSSSRPTLTRTPSITSRSVNSVTERSKSLSKGRIENQFGQLYLLAGRVPNALKHFSTAIALSKATGDFLWQGLSLELFTVCLVIMAHLHVDVQIPPNILSMFPSYNDRLNAFGPLKFDALLNFITEMRNVVDQLYQKSTLQPNDAVPGLCFSESILRYAHLLTVVYSCKGFNDNALDHIIAQAPIRPVKKATTYVPNKATICQWIMRAQGQHLNSLSIRERCRIYGAMANMLGSIGFSRLRVKMLRELVASLTPVLLETRRQNASKNGIHPEVIASHTAQSFKSTHYCNILPLISEICQEYGLLKTDGSLLNPELTKWGWSNLQFDVLNELISLCDSLSDYRSILLLISLFFLTSVQTASSSQQISMFKAFRKTYLFASNAGIHINAPYWDPFMITDLKFIGSSENAELIHQRLRNGLPKSIEKGPFIYNPFNRRQDQNQSKSVLVVDEQVAFSIYFRNPLSVSVEVQDVHLETKGVSAKCSHSTFTMRPLSIERTTLTVTPTETGELHIVGCRVKVFGCEPILQYVYEAKDKHKSLHVYLEKSKDVNAELRSLDTIDHLWTYFPFKKDLKTKSFDCIVIASQPKLSLAFQNLTSGKFNFAEYETGELVYVIENTSFVEASHISVLFEDSSSKAFEQAIADKSITADRLYELQFEEFNLPTFTVESSQPFSLSPGERREIHIKIRAKPNSQEGLILFESSVHKPEDTEFYVRRLRIPVSLNISKRVDLKQWSAFMDTEGDPSYCLVLLNFYNHFSEPLFVTVKTASTDESRSVLIKPKADNVILFRLKRFIMSSEEINLDIPNLSTKQFVLSSGFKKSIEDSYTMKKRFWIKEYFLKEVQASWKTDDNLHHGEIYLRNHILSDEMANNLSILPIRIQAWVSYDSEKVTTVCPREPFKLVLEFFGHADTNMRYKISWTQLNTQANTSSFNGLILDGPEEDIVCFNNSKCHVVIERNMFAYTTGMYNIFVRIFNEELQLLSQPVDLDEPILLIVDAK.

The disordered stretch occupies residues 211 to 243; sequence SIHSLGSSSRPTLTRTPSITSRSVNSVTERSKS. Residues 214-233 are compositionally biased toward low complexity; that stretch reads SLGSSSRPTLTRTPSITSRS.

The protein belongs to the TRS120 family. As to quaternary structure, part of the multisubunit TRAPP (transport protein particle) II complex.

Its subcellular location is the golgi apparatus. It is found in the cis-Golgi network. Component of the TRAPP II complex. TRAPP II seems to play a role in intra-Golgi transport. This Schizosaccharomyces pombe (strain 972 / ATCC 24843) (Fission yeast) protein is Transport protein particle subunit trs120 (trs120).